The following is a 565-amino-acid chain: Potassium-transporting ATPase potassium-binding subunit (565 aa).

A run of 12 helical transmembrane segments spans residues 6-26, 63-83, 132-152, 175-195, 250-270, 283-303, 327-347, 354-374, 379-399, 418-438, 483-503, and 524-544; these read LMLLGLLILLLLILAPLLGSL, LLAILAFNLLGIVLLFALLMA, GLGVQNFLSAASGIAVLFALI, LYVLLPLSLLLSLLFVSQGVI, LSNLLQMVAIFLLPTALCFAF, LLWTMSLIFIVAAGCVMYAEL, FGILASALYAVVTTAASCGAV, FTALGGMVPMWLMQIGEVVFG, GLYGMLLFVLLTVFIAGLMIG, ALAILIPPALVLTGSAIALLC, LLLALVMLIGRFGVIIPVMAI, and GALFVSLLIGTILLVGALTFI.

This sequence belongs to the KdpA family. As to quaternary structure, the system is composed of three essential subunits: KdpA, KdpB and KdpC.

It localises to the cell inner membrane. Part of the high-affinity ATP-driven potassium transport (or Kdp) system, which catalyzes the hydrolysis of ATP coupled with the electrogenic transport of potassium into the cytoplasm. This subunit binds the periplasmic potassium ions and delivers the ions to the membrane domain of KdpB through an intramembrane tunnel. The sequence is that of Potassium-transporting ATPase potassium-binding subunit from Edwardsiella ictaluri (strain 93-146).